Consider the following 347-residue polypeptide: Integrin beta-1-binding protein 2 (347 aa).

Cys-5, Cys-10, Cys-24, and His-27 together coordinate Zn(2+). The 60-residue stretch at 5–64 (CRNKGCGQHFDPNTNLPDSCCHHPGVPIFHDALKGWSCCRKRTVDFSEFLNIKGCTMGPH) folds into the CHORD 1 domain. Residues 28-31 (PGVP) carry the SH3-binding motif. Positions 42, 43, 59, and 64 each coordinate Zn(2+). The SH3-binding motif lies at 70–78 (PEAPQPEGP). Residues Cys-149 and Cys-154 each contribute to the Zn(2+) site. The 60-residue stretch at 149–208 (CQNPGCDAVYQGPESDATPCTYHPGAPRFHEGMKSWSCCGIQTLDFGAFLAQPGCRVGRH) folds into the CHORD 2 domain. The short motif at 158 to 161 (YQGP) is the SH2-binding element. Zn(2+)-binding residues include Cys-168 and His-171. The short motif at 172 to 175 (PGAP) is the SH3-binding element. The Zn(2+) site is built by Cys-186, Cys-187, Cys-203, and His-208. In terms of domain architecture, CS spans 215 to 304 (PASCRHDWHQ…ADPGSWAQLE (90 aa)). The SH2-binding motif lies at 234 to 237 (YGQI). Residues 319-347 (LEMDEEESDDSDDDLSWTEEEEEEEAMGE) form a disordered region. Residues 320–347 (EMDEEESDDSDDDLSWTEEEEEEEAMGE) show a composition bias toward acidic residues.

As to quaternary structure, interacts with beta-1 integrin subunit. This interaction is regulated by divalent cations, and it occurs only in absence of calcium. Expressed in skeletal and cardiac muscles but not in other tissues.

In terms of biological role, may play a role during maturation and/or organization of muscles cells. The chain is Integrin beta-1-binding protein 2 (ITGB1BP2) from Homo sapiens (Human).